Here is a 76-residue protein sequence, read N- to C-terminus: Rhesus theta defensin-1/2 subunit B (76 aa).

An N-terminal signal peptide occupies residues 1-22; the sequence is MRTFALLTAMLLLVALHAQAEA. Positions 23-64 are excised as a propeptide; that stretch reads RQARADEAAAQQQPGADDQGMAHSFTRPENAALPLSESARGL. Positions 25–54 are disordered; that stretch reads ARADEAAAQQQPGADDQGMAHSFTRPENAA. The segment covering 30–44 has biased composition (low complexity); that stretch reads AAAQQQPGADDQGMA. Residue Arg-65 forms a Cyclopeptide (Arg-Cys) (interchain with C-73 in subunit A); in form RTD-1 linkage. A Cyclopeptide (Arg-Cys) (interchain with C-73 in subunit B); in form RTD-2 cross-link involves residue Arg-65. Cys-68 and Cys-73 are joined by a disulfide. A Cyclopeptide (Cys-Arg) (interchain with R-65 in subunit A); in form RTD-1 cross-link involves residue Cys-73. A Cyclopeptide (Cys-Arg) (interchain with R-65 in subunit B); in form RTD-2 cross-link involves residue Cys-73. Residues 74–76 constitute a propeptide that is removed on maturation; the sequence is QLL.

It belongs to the alpha-defensin family. Theta subfamily. RTD-1 is a cyclic heterodimer composed of subunits A and B; disulfide-linked. RTD-2 is a cyclic homodimer composed of two subunits B; disulfide-linked. Forms a cyclic peptide with 1 subunit B (RTD-2) or with 1 subunit A (RTD-1). An additional intersubunit disulfide bond is formed. RTD-1 is expressed in bone marrow. Detected in promyelocytes, myelocytes and mature neutrophils and monocytes.

Its function is as follows. RTD-1 and RTD-2 have similar antimicrobial activities against the Gram-positive bacteria S.aureus 502A and L.monocytogenes, the Gram-negative bacterium S.typhimurium, and the fungi C.albicans 16820 and C.neoformans 271A. RTD-2 is 2-3-fold less active than RTD-1 against E.coli ML35. The polypeptide is Rhesus theta defensin-1/2 subunit B (RTD1B) (Macaca mulatta (Rhesus macaque)).